The chain runs to 538 residues: ESX-3 secretion system ATPase EccB3 (538 aa).

The segment covering Met-1–Ser-16 has biased composition (basic and acidic residues). The segment at Met-1–Asn-25 is disordered. Residues Val-75–Ile-95 form a helical membrane-spanning segment.

It belongs to the EccB family. In terms of assembly, part of the ESX-3 / type VII secretion system (T7SS), which is composed of cytosolic and membrane components. The ESX-3 membrane complex is composed of EccB3, EccC3, EccD3 and EccE3.

The protein localises to the cell inner membrane. Functionally, an ATPase. Part of the ESX-3 specialized secretion system, which is important for iron and zinc uptake or homeostasis. The protein is ESX-3 secretion system ATPase EccB3 of Mycobacterium tuberculosis (strain CDC 1551 / Oshkosh).